Reading from the N-terminus, the 190-residue chain is ADP-ribosylation factor F (190 aa).

GTP is bound by residues 34 to 40, 75 to 79, and 136 to 139; these read DGAGKST, DIGGQ, and NKQD.

The protein belongs to the small GTPase superfamily. Arf family.

Its subcellular location is the golgi apparatus. Its function is as follows. GTP-binding protein that may be involved in protein trafficking. May modulate vesicle budding and uncoating within the Golgi apparatus. In Dictyostelium discoideum (Social amoeba), this protein is ADP-ribosylation factor F (arrF).